A 213-amino-acid chain; its full sequence is Glycerol-3-phosphate acyltransferase (213 aa).

A run of 5 helical transmembrane segments spans residues isoleucine 3 to serine 23, lysine 51 to alanine 71, aspartate 78 to phenylalanine 98, alanine 115 to phenylalanine 135, and leucine 140 to proline 160.

The protein belongs to the PlsY family. Probably interacts with PlsX.

Its subcellular location is the cell inner membrane. It carries out the reaction an acyl phosphate + sn-glycerol 3-phosphate = a 1-acyl-sn-glycero-3-phosphate + phosphate. Its pathway is lipid metabolism; phospholipid metabolism. Functionally, catalyzes the transfer of an acyl group from acyl-phosphate (acyl-PO(4)) to glycerol-3-phosphate (G3P) to form lysophosphatidic acid (LPA). This enzyme utilizes acyl-phosphate as fatty acyl donor, but not acyl-CoA or acyl-ACP. The polypeptide is Glycerol-3-phosphate acyltransferase (Burkholderia cenocepacia (strain HI2424)).